A 481-amino-acid polypeptide reads, in one-letter code: MQWEVVIGLEIHTQLATQSKIFSGSATTFGSEPNTQASLVDLGMPGVLPVLNQEAVRMACMFGLAIDAQIGKRNVFARKNYFYPDLPKGYQISQMDLPIVGKGHLDIALEDGTIKRIGVTRAHLEEDAGKSLHEDFSGSTGIDLNRAGTPLLEIVSEPDMRSAKEAVAYVKAIHALVRYLGICDGNMAEGSLRCDCNVSIRPKGQAEFGTRCEIKNVNSFRFIERAINSEIQRQIDLIEDGGKVVQETRLYDPNKDETRSMRSKEEANDYRYFPDPDLLPVVIEDSFLETIRTGLPELPPQKVERFQSQYGLSAYDANVLASSREQADYFEQVVKIGGDAKLAANWVMVELGSLLNKLGIEIDQAPVSAEQLGGMLLRIRDNTISGKIAKTVFEAMAAGEGDADSIIESKGLKQVTDTGAIDKMLDEVLAANAEQVEQYRAADEAKRGKMFGFFVGQAMKASKGKANPGQVNQLLKAKLEG.

The protein belongs to the GatB/GatE family. GatB subfamily. Heterotrimer of A, B and C subunits.

The enzyme catalyses L-glutamyl-tRNA(Gln) + L-glutamine + ATP + H2O = L-glutaminyl-tRNA(Gln) + L-glutamate + ADP + phosphate + H(+). It catalyses the reaction L-aspartyl-tRNA(Asn) + L-glutamine + ATP + H2O = L-asparaginyl-tRNA(Asn) + L-glutamate + ADP + phosphate + 2 H(+). Allows the formation of correctly charged Asn-tRNA(Asn) or Gln-tRNA(Gln) through the transamidation of misacylated Asp-tRNA(Asn) or Glu-tRNA(Gln) in organisms which lack either or both of asparaginyl-tRNA or glutaminyl-tRNA synthetases. The reaction takes place in the presence of glutamine and ATP through an activated phospho-Asp-tRNA(Asn) or phospho-Glu-tRNA(Gln). The sequence is that of Aspartyl/glutamyl-tRNA(Asn/Gln) amidotransferase subunit B from Pseudomonas putida (strain W619).